A 196-amino-acid chain; its full sequence is Ribosome maturation factor RimP (196 aa).

Positions 164–196 (LAPQKPNKPGPKKTGHEKKKPSNESAAGKPRAE) are disordered. A compositionally biased stretch (basic residues) spans 173 to 182 (GPKKTGHEKK).

This sequence belongs to the RimP family.

Its subcellular location is the cytoplasm. In terms of biological role, required for maturation of 30S ribosomal subunits. In Xanthomonas oryzae pv. oryzae (strain MAFF 311018), this protein is Ribosome maturation factor RimP.